The following is a 433-amino-acid chain: 3-phosphoshikimate 1-carboxyvinyltransferase (433 aa).

Positions 22, 23, and 27 each coordinate 3-phosphoshikimate. A phosphoenolpyruvate-binding site is contributed by Lys-22. Positions 94 and 122 each coordinate phosphoenolpyruvate. 3-phosphoshikimate-binding residues include Ser-168, Ser-169, Gln-170, Ser-196, Asp-319, and Lys-346. A phosphoenolpyruvate-binding site is contributed by Gln-170. Asp-319 (proton acceptor) is an active-site residue. Arg-350, Arg-394, and Lys-418 together coordinate phosphoenolpyruvate.

It belongs to the EPSP synthase family. As to quaternary structure, monomer.

It localises to the cytoplasm. The catalysed reaction is 3-phosphoshikimate + phosphoenolpyruvate = 5-O-(1-carboxyvinyl)-3-phosphoshikimate + phosphate. The protein operates within metabolic intermediate biosynthesis; chorismate biosynthesis; chorismate from D-erythrose 4-phosphate and phosphoenolpyruvate: step 6/7. In terms of biological role, catalyzes the transfer of the enolpyruvyl moiety of phosphoenolpyruvate (PEP) to the 5-hydroxyl of shikimate-3-phosphate (S3P) to produce enolpyruvyl shikimate-3-phosphate and inorganic phosphate. This is 3-phosphoshikimate 1-carboxyvinyltransferase from Nitrosomonas eutropha (strain DSM 101675 / C91 / Nm57).